The sequence spans 221 residues: Adenylate kinase (221 aa).

Residue 10-15 (GAGKGT) participates in ATP binding. The interval 30–59 (STGDMLRAAVKAGTEFGVAAKKIMDAGGLV) is NMP. Residues Thr-31, Arg-36, 57–59 (GLV), 85–88 (GFPR), and Gln-92 each bind AMP. Residues 122–159 (GRRVHPASGRTYHIKYNPPKVEGKDDVTGDALIQRDDD) are LID. Residues Arg-123 and 132-133 (TY) contribute to the ATP site. AMP-binding residues include Arg-156 and Arg-167. An ATP-binding site is contributed by Gly-207.

The protein belongs to the adenylate kinase family. In terms of assembly, monomer.

It is found in the cytoplasm. It catalyses the reaction AMP + ATP = 2 ADP. Its pathway is purine metabolism; AMP biosynthesis via salvage pathway; AMP from ADP: step 1/1. In terms of biological role, catalyzes the reversible transfer of the terminal phosphate group between ATP and AMP. Plays an important role in cellular energy homeostasis and in adenine nucleotide metabolism. This is Adenylate kinase from Polynucleobacter asymbioticus (strain DSM 18221 / CIP 109841 / QLW-P1DMWA-1) (Polynucleobacter necessarius subsp. asymbioticus).